A 366-amino-acid polypeptide reads, in one-letter code: 3-dehydroquinate synthase (366 aa).

NAD(+) contacts are provided by residues 69–74, 103–107, 127–128, Lys140, and Lys149; these read DGEAFK, GVIGD, and TT. Glu182, His245, and His262 together coordinate Zn(2+).

Belongs to the sugar phosphate cyclases superfamily. Dehydroquinate synthase family. Co(2+) is required as a cofactor. The cofactor is Zn(2+). NAD(+) serves as cofactor.

The protein resides in the cytoplasm. It carries out the reaction 7-phospho-2-dehydro-3-deoxy-D-arabino-heptonate = 3-dehydroquinate + phosphate. It participates in metabolic intermediate biosynthesis; chorismate biosynthesis; chorismate from D-erythrose 4-phosphate and phosphoenolpyruvate: step 2/7. Functionally, catalyzes the conversion of 3-deoxy-D-arabino-heptulosonate 7-phosphate (DAHP) to dehydroquinate (DHQ). The protein is 3-dehydroquinate synthase of Pseudomonas fluorescens (strain Pf0-1).